We begin with the raw amino-acid sequence, 184 residues long: Protein YrdA (184 aa).

Belongs to the gamma-class carbonic anhydrase family.

The protein is Protein YrdA (yrdA) of Escherichia coli (strain K12).